The sequence spans 465 residues: Glutamate--tRNA ligase 2 (465 aa).

Residues Pro8 to Asn18 carry the 'HIGH' region motif. The 'KMSKS' region motif lies at Pro249 to Arg253. Lys252 lines the ATP pocket.

It belongs to the class-I aminoacyl-tRNA synthetase family. Glutamate--tRNA ligase type 1 subfamily. As to quaternary structure, monomer.

It is found in the cytoplasm. It carries out the reaction tRNA(Glu) + L-glutamate + ATP = L-glutamyl-tRNA(Glu) + AMP + diphosphate. Functionally, catalyzes the attachment of glutamate to tRNA(Glu) in a two-step reaction: glutamate is first activated by ATP to form Glu-AMP and then transferred to the acceptor end of tRNA(Glu). The protein is Glutamate--tRNA ligase 2 of Coxiella burnetii (strain CbuK_Q154) (Coxiella burnetii (strain Q154)).